The following is a 743-amino-acid chain: Phosphoribosylformylglycinamidine synthase subunit PurL (743 aa).

H50 is a catalytic residue. The ATP site is built by Y53 and K92. Residue E94 coordinates Mg(2+). Substrate contacts are provided by residues 95–98 and R117; that span reads SHNH. The Proton acceptor role is filled by H96. D118 provides a ligand contact to Mg(2+). Residue Q241 coordinates substrate. Mg(2+) is bound at residue D269. Residue 313–315 coordinates substrate; the sequence is ESQ. ATP-binding residues include D494 and G531. A Mg(2+)-binding site is contributed by N532. S534 serves as a coordination point for substrate.

It belongs to the FGAMS family. Monomer. Part of the FGAM synthase complex composed of 1 PurL, 1 PurQ and 2 PurS subunits.

Its subcellular location is the cytoplasm. The enzyme catalyses N(2)-formyl-N(1)-(5-phospho-beta-D-ribosyl)glycinamide + L-glutamine + ATP + H2O = 2-formamido-N(1)-(5-O-phospho-beta-D-ribosyl)acetamidine + L-glutamate + ADP + phosphate + H(+). It functions in the pathway purine metabolism; IMP biosynthesis via de novo pathway; 5-amino-1-(5-phospho-D-ribosyl)imidazole from N(2)-formyl-N(1)-(5-phospho-D-ribosyl)glycinamide: step 1/2. Functionally, part of the phosphoribosylformylglycinamidine synthase complex involved in the purines biosynthetic pathway. Catalyzes the ATP-dependent conversion of formylglycinamide ribonucleotide (FGAR) and glutamine to yield formylglycinamidine ribonucleotide (FGAM) and glutamate. The FGAM synthase complex is composed of three subunits. PurQ produces an ammonia molecule by converting glutamine to glutamate. PurL transfers the ammonia molecule to FGAR to form FGAM in an ATP-dependent manner. PurS interacts with PurQ and PurL and is thought to assist in the transfer of the ammonia molecule from PurQ to PurL. In Mesorhizobium japonicum (strain LMG 29417 / CECT 9101 / MAFF 303099) (Mesorhizobium loti (strain MAFF 303099)), this protein is Phosphoribosylformylglycinamidine synthase subunit PurL.